A 202-amino-acid chain; its full sequence is Probable cobalt-precorrin-6B C(15)-methyltransferase (decarboxylating) (202 aa).

S-adenosyl-L-methionine contacts are provided by residues Thr29, 53-57 (GCGSG), Asp77, and Val106.

It belongs to the methyltransferase superfamily. Archaeal-type CbiT family.

It carries out the reaction Co-precorrin-6B + S-adenosyl-L-methionine = Co-precorrin-7 + S-adenosyl-L-homocysteine + CO2. It functions in the pathway cofactor biosynthesis; adenosylcobalamin biosynthesis; cob(II)yrinate a,c-diamide from sirohydrochlorin (anaerobic route): step 8/10. Catalyzes the methylation of C-15 in cobalt-precorrin-6B followed by the decarboxylation of C-12 to form cobalt-precorrin-7. The protein is Probable cobalt-precorrin-6B C(15)-methyltransferase (decarboxylating) of Thermoplasma acidophilum (strain ATCC 25905 / DSM 1728 / JCM 9062 / NBRC 15155 / AMRC-C165).